A 361-amino-acid chain; its full sequence is MAQVYNFSSGPAMLPADVLRVAQEELRDWQGLGTSVMEISHRSKEFIQVAEQAEQDFRDLLEIPSNYKVLFCHGGGRGQFSALPLNLLGNKTTADYVDGGYWAASAVKEAKKYLTPNVIDAKITVDGKRAIKPMSEWQLSADAAYVHYCPNETIDGIAINDTPDFGDAIVTADFSSTILSHPIDVSRYGVIYAGAQKNIGPAGLTLVIVREDLLGKAHVSCPSVLDYSVLSENDSMFNTPPTFAWYLAGLVFKWLKTNGGVAAMDKINQQKADLLYGVIDNSDFYRNDVATANRSRMNVPFQLADSSLDKLFLEESFAAGLHALKGHRVVGGMRASIYNAMPLEGVKALTDFMVDFERRHG.

L-glutamate is bound by residues Ser9 and Arg42. Pyridoxal 5'-phosphate-binding positions include 76–77 (GR), Trp102, Thr153, Asp173, and Gln196. The residue at position 197 (Lys197) is an N6-(pyridoxal phosphate)lysine. 238-239 (NT) is a binding site for pyridoxal 5'-phosphate.

It belongs to the class-V pyridoxal-phosphate-dependent aminotransferase family. SerC subfamily. In terms of assembly, homodimer. It depends on pyridoxal 5'-phosphate as a cofactor.

The protein localises to the cytoplasm. The catalysed reaction is O-phospho-L-serine + 2-oxoglutarate = 3-phosphooxypyruvate + L-glutamate. It catalyses the reaction 4-(phosphooxy)-L-threonine + 2-oxoglutarate = (R)-3-hydroxy-2-oxo-4-phosphooxybutanoate + L-glutamate. Its pathway is amino-acid biosynthesis; L-serine biosynthesis; L-serine from 3-phospho-D-glycerate: step 2/3. It functions in the pathway cofactor biosynthesis; pyridoxine 5'-phosphate biosynthesis; pyridoxine 5'-phosphate from D-erythrose 4-phosphate: step 3/5. Functionally, catalyzes the reversible conversion of 3-phosphohydroxypyruvate to phosphoserine and of 3-hydroxy-2-oxo-4-phosphonooxybutanoate to phosphohydroxythreonine. This Cronobacter sakazakii (strain ATCC BAA-894) (Enterobacter sakazakii) protein is Phosphoserine aminotransferase.